A 484-amino-acid polypeptide reads, in one-letter code: Sulfoacetaldehyde dehydrogenase (484 aa).

NAD(+) contacts are provided by residues 105 to 110 (LTPVTN), glycine 188, and glycine 206. Catalysis depends on cysteine 239, which acts as the Nucleophile. NAD(+) contacts are provided by glutamate 332 and leucine 412.

Belongs to the aldehyde dehydrogenase family.

It carries out the reaction sulfoacetaldehyde + NAD(+) + CoA = sulfoacetyl-CoA + NADH + H(+). In terms of biological role, part of a variant of the sulfo-TK pathway, a D-sulfoquinovose degradation pathway that produces sulfoacetate. Catalyzes the oxidation of sulfoacetaldehyde (SA) to sulfoacetyl-coenzyme A (sulfoacetyl-CoA). Is highly specific for NAD(+), with only residual (1%) activity with NADP(+). Cannot use acetaldehyde. This is Sulfoacetaldehyde dehydrogenase from Acholeplasma sp.